A 325-amino-acid chain; its full sequence is MPLRIVFLGSPAFAVAPLERLVADARYQVVGVVTQPDRPAGRGRASVATPVKQAALRLGVPVLTPETLRDPAAVAELAALRPDVGVVAAYGEILRRDVLAIPPLGYVNIHPSLLPLYRGPSPVAGAILNGDAETGVTIMLIDAKMDSGPILAQRTVPLPPDARTGPLTQELFTIGADVLVETLDAYARGAITPQPQDHARATFTKLLTRDDGIIDWTQPAVRIERMTRAYDPWPGATTMWRGAPLKIIAARVIADRCADVPPGTLIDTADGPAVATGNGLLALITVQPAGKRPLPAADWRRGLRLSGGERLGDASARLSGGEAVH.

112–115 (SLLP) is a binding site for (6S)-5,6,7,8-tetrahydrofolate.

Belongs to the Fmt family.

It catalyses the reaction L-methionyl-tRNA(fMet) + (6R)-10-formyltetrahydrofolate = N-formyl-L-methionyl-tRNA(fMet) + (6S)-5,6,7,8-tetrahydrofolate + H(+). In terms of biological role, attaches a formyl group to the free amino group of methionyl-tRNA(fMet). The formyl group appears to play a dual role in the initiator identity of N-formylmethionyl-tRNA by promoting its recognition by IF2 and preventing the misappropriation of this tRNA by the elongation apparatus. The protein is Methionyl-tRNA formyltransferase of Roseiflexus sp. (strain RS-1).